A 336-amino-acid chain; its full sequence is Small ribosomal subunit protein RACK1y (336 aa).

WD repeat units follow at residues 15-55 (GHND…TAVA), 74-113 (GHSH…TTRR), 116-155 (GHTK…KYTI), 164-205 (GHTG…LRTK), 208-247 (GHNG…MLYK), 249-287 (DAGA…VMQD), and 297-336 (SQML…GYAI).

It belongs to the WD repeat G protein beta family. Ribosomal protein RACK1 subfamily. Homodimer and heterodimer with RACK1A.

In terms of biological role, component of the RACK1 regulatory proteins that play a role in multiple signal transduction pathways. The protein is Small ribosomal subunit protein RACK1y (RACK1B) of Oryza sativa subsp. japonica (Rice).